Consider the following 1441-residue polypeptide: Protein clueless (1441 aa).

Disordered stretches follow at residues 1–79 (MALD…EAAT) and 106–131 (VAANDESESAEQQAAENAASSGELES). Polar residues predominate over residues 8 to 22 (KNSSSAATGDANTVK). Positions 54 to 63 (AKKKGKKNRN) are enriched in basic residues. Composition is skewed to low complexity over residues 64–79 (KSPPIATDAETTEAAT) and 106–126 (VAANDESESAEQQAAENAASS). Ser273 carries the post-translational modification Phosphoserine. The 243-residue stretch at 427–669 (RAEDAFSSKL…RTFPPDVNFL (243 aa)) folds into the Clu domain. The span at 726-753 (KKQDEAKEGTKEPASETEKESPPKAITE) shows a compositional bias: basic and acidic residues. Disordered stretches follow at residues 726–769 (KKQD…GETK) and 961–1009 (EIHK…SGGT). Positions 964–977 (KKRTNTKYNKHKSS) are enriched in basic residues. A compositionally biased stretch (low complexity) spans 978 to 1009 (KSSGSGSKQSGQTSNQNGTSTSPSSSTASGGT). TPR repeat units lie at residues 1109–1142 (AYNFYTTGQSKIQQGLFKEGYELISEALNLLNNV), 1235–1268 (ALIDSNISLILHALGEYELSLRFIEHALKLNLKY), and 1270–1303 (GAKAMHVAVSYHLMARTQSCMGDFRSALNNEKET).

The protein belongs to the CLU family.

Its subcellular location is the cytoplasm. MRNA-binding protein involved in proper cytoplasmic distribution of mitochondria. In Drosophila willistoni (Fruit fly), this protein is Protein clueless.